The chain runs to 403 residues: Vacuole membrane protein 1 homolog (403 aa).

Positions 7 to 33 form a coiled coil; it reads IVLSNEKDIQLRIQQLEERKEKRKNVK. Helical transmembrane passes span 65–85, 102–122, 150–170, 175–195, 240–260, 263–283, 294–314, and 348–368; these read FLLF…YVPG, IWWV…LHTF, ANSF…WMIL, WAAL…YFVA, LIGN…NPLF, AGIT…ATFI, ACFV…SFIE, and VGLA…MSIV.

It belongs to the VMP1 family.

The protein resides in the membrane. Its subcellular location is the endoplasmic reticulum. It carries out the reaction a 1,2-diacyl-sn-glycero-3-phospho-L-serine(in) = a 1,2-diacyl-sn-glycero-3-phospho-L-serine(out). It catalyses the reaction cholesterol(in) = cholesterol(out). The catalysed reaction is a 1,2-diacyl-sn-glycero-3-phosphocholine(in) = a 1,2-diacyl-sn-glycero-3-phosphocholine(out). The enzyme catalyses a 1,2-diacyl-sn-glycero-3-phosphoethanolamine(in) = a 1,2-diacyl-sn-glycero-3-phosphoethanolamine(out). Phospholipid scramblase involved in lipid homeostasis and membrane dynamics processes. Required for autophagosome formation: participates in early stages of autophagosome biogenesis at the endoplasmic reticulum (ER) membrane by reequilibrating the leaflets of the ER as lipids are extracted. In addition to autophagy, involved in other processes in which phospholipid scramblase activity is required. The sequence is that of Vacuole membrane protein 1 homolog from Dictyostelium discoideum (Social amoeba).